The sequence spans 172 residues: 3-hydroxydecanoyl-[acyl-carrier-protein] dehydratase (172 aa).

Residue histidine 71 is part of the active site.

This sequence belongs to the thioester dehydratase family. FabA subfamily. As to quaternary structure, homodimer.

The protein resides in the cytoplasm. The catalysed reaction is a (3R)-hydroxyacyl-[ACP] = a (2E)-enoyl-[ACP] + H2O. It carries out the reaction (3R)-hydroxydecanoyl-[ACP] = (2E)-decenoyl-[ACP] + H2O. It catalyses the reaction (2E)-decenoyl-[ACP] = (3Z)-decenoyl-[ACP]. Its pathway is lipid metabolism; fatty acid biosynthesis. Functionally, necessary for the introduction of cis unsaturation into fatty acids. Catalyzes the dehydration of (3R)-3-hydroxydecanoyl-ACP to E-(2)-decenoyl-ACP and then its isomerization to Z-(3)-decenoyl-ACP. Can catalyze the dehydratase reaction for beta-hydroxyacyl-ACPs with saturated chain lengths up to 16:0, being most active on intermediate chain length. This Escherichia coli (strain 55989 / EAEC) protein is 3-hydroxydecanoyl-[acyl-carrier-protein] dehydratase.